A 300-amino-acid chain; its full sequence is 2-keto-3-deoxy-L-fuconate dehydrogenase (300 aa).

NAD(+) is bound by residues 63–90 and aspartate 112; that span reads LITA…IATD. Arginine 198 provides a ligand contact to substrate. Tyrosine 201 (proton acceptor) is an active-site residue. NAD(+) contacts are provided by residues lysine 205 and 234 to 238; that span reads IKTPS. The substrate site is built by arginine 242 and arginine 260.

This sequence belongs to the short-chain dehydrogenases/reductases (SDR) family.

Its function is as follows. Plays a role in the catabolism of L-fucose. Catalyzes the NAD(+)-dependent oxidation of 2-keo-3-deoxy-L-fuconate to 2,4-diketo-3-deoxy-L-fuconate. The protein is 2-keto-3-deoxy-L-fuconate dehydrogenase of Xanthomonas campestris pv. campestris (strain ATCC 33913 / DSM 3586 / NCPPB 528 / LMG 568 / P 25).